Consider the following 290-residue polypeptide: Elongation factor Ts (290 aa).

The segment at 81–84 (TDFV) is involved in Mg(2+) ion dislocation from EF-Tu.

Belongs to the EF-Ts family.

It is found in the cytoplasm. Functionally, associates with the EF-Tu.GDP complex and induces the exchange of GDP to GTP. It remains bound to the aminoacyl-tRNA.EF-Tu.GTP complex up to the GTP hydrolysis stage on the ribosome. This Vesicomyosocius okutanii subsp. Calyptogena okutanii (strain HA) protein is Elongation factor Ts.